We begin with the raw amino-acid sequence, 464 residues long: Putative guanine nucleotide-binding protein subunit alpha (464 aa).

A G-alpha domain is found at 33–415 (HSKLKRGDGP…ETKRDKYNEK (383 aa)). Residues 36–49 (LKRGDGPGESGKST) are G1 motif. Residues 41 to 48 (GPGESGKS), 147 to 151 (DVGGQ), 214 to 220 (LRSRTKT), 239 to 243 (DVGGQ), 268 to 271 (RNRD), and 310 to 313 (TSQS) contribute to the GTP site. Ser-48 lines the Mg(2+) pocket. The tract at residues 212-220 (DVLRSRTKT) is G2 motif. Thr-220 lines the Mg(2+) pocket. The interval 235–244 (FRMVDVGGQR) is G3 motif. The tract at residues 306–313 (VMFLTSQS) is G4 motif. The G5 motif stretch occupies residues 382-387 (GYSGTC).

In the N-terminal section; belongs to the G-alpha family. It in the C-terminal section; belongs to the class-II aminoacyl-tRNA synthetase family. In terms of assembly, g proteins are composed of 3 units; alpha, beta and gamma. The alpha chain contains the guanine nucleotide binding site.

Its function is as follows. Guanine nucleotide-binding proteins (G proteins) are involved as modulators or transducers in various transmembrane signaling systems. This chain is Putative guanine nucleotide-binding protein subunit alpha, found in Leishmania donovani.